The chain runs to 383 residues: GA-binding protein subunit beta-1 (383 aa).

Ser-2 is modified (N-acetylserine). 2 ANK repeats span residues 5-34 and 37-66; these read DLGK…PFTT and LGTS…SRDA. N6-acetyllysine is present on Lys-69. 3 ANK repeats span residues 70-99, 103-132, and 136-166; these read VDRT…DVNA, LKMT…DVHT, and FCKT…QINT. Residues Lys-340 and Lys-369 each carry the N6-acetyllysine modification.

As to quaternary structure, heterotetramer of two alpha and two beta subunits. Interacts with HCFC1, causing repression of transcriptional activity. Acetylated by EP300/p300. Deacetylated by SIRT7, promoting heterotetramerization and activity.

Its subcellular location is the nucleus. In terms of biological role, transcription factor capable of interacting with purine rich repeats (GA repeats). Acts as a master regulator of nuclear-encoded mitochondrial genes. The chain is GA-binding protein subunit beta-1 (GABPB1) from Bos taurus (Bovine).